Reading from the N-terminus, the 146-residue chain is Aminoglycoside N(6')-acetyltransferase type 1 (146 aa).

The N-acetyltransferase domain maps to 1-146; it reads MNIMPISESQ…RVVYFKKNIG (146 aa). Substrate-binding residues include Trp22, His25, Tyr66, and Glu79. 81-83 provides a ligand contact to acetyl-CoA; it reads IFV. Asp115 lines the substrate pocket. Position 120 (Asn120) interacts with acetyl-CoA. Glu136 lines the substrate pocket.

Homodimer.

It carries out the reaction kanamycin B + acetyl-CoA = N(6')-acetylkanamycin B + CoA + H(+). Functionally, catalyzes the transfer of an acetyl group from acetyl-CoA to the 6'-amino group of aminoglycoside molecules conferring resistance to antibiotics containing the purpurosamine ring including amikacin, kanamycin, tobramycin and netilmicin. The polypeptide is Aminoglycoside N(6')-acetyltransferase type 1 (Acinetobacter baumannii).